The chain runs to 336 residues: Ribosomal RNA large subunit methyltransferase F (336 aa).

The protein belongs to the methyltransferase superfamily. METTL16/RlmF family.

Its subcellular location is the cytoplasm. The catalysed reaction is adenosine(1618) in 23S rRNA + S-adenosyl-L-methionine = N(6)-methyladenosine(1618) in 23S rRNA + S-adenosyl-L-homocysteine + H(+). In terms of biological role, specifically methylates the adenine in position 1618 of 23S rRNA. This is Ribosomal RNA large subunit methyltransferase F from Yersinia pestis bv. Antiqua (strain Nepal516).